Reading from the N-terminus, the 327-residue chain is Vacuolar protein sorting-associated protein 26A (327 aa).

Residues 306–327 form a disordered region; it reads RTNFHQRFESPESQASAEQPEM. Position 315 is a phosphoserine (S315). The segment covering 316 to 327 has biased composition (polar residues); the sequence is PESQASAEQPEM.

Belongs to the VPS26 family. Component of the heterotrimeric retromer cargo-selective complex (CSC), also described as vacuolar protein sorting subcomplex (VPS), formed by VPS26 (VPS26A or VPS26B), VPS29 and VPS35. The CSC has a highly elongated structure with VPS26 and VPS29 binding independently at opposite distal ends of VPS35 as central platform. The CSC is believed to associate with variable sorting nexins to form functionally distinct retromer complex variants. The originally described retromer complex (also called SNX-BAR retromer) is a pentamer containing the CSC and a heterodimeric membrane-deforming subcomplex formed between SNX1 or SNX2 and SNX5 or SNX6 (also called SNX-BAR subcomplex); the respective CSC and SNX-BAR subcomplexes associate with low affinity. The CSC associates with SNX3 to form a SNX3-retromer complex. The CSC associates with SNX27, the WASH complex and the SNX-BAR subcomplex to form the SNX27-retromer complex. Interacts with VPS29, VPS35, SNX27, SNX1, SNX2, SNX5, SNX6, SNX3, RAB7A, ECPAS, EHD1, WASHC5, SORL1.

Its subcellular location is the cytoplasm. It is found in the endosome membrane. It localises to the early endosome. Acts as a component of the retromer cargo-selective complex (CSC). The CSC is believed to be the core functional component of retromer or respective retromer complex variants acting to prevent missorting of selected transmembrane cargo proteins into the lysosomal degradation pathway. The recruitment of the CSC to the endosomal membrane involves RAB7A and SNX3. The SNX-BAR retromer mediates retrograde transport of cargo proteins from endosomes to the trans-Golgi network (TGN) and is involved in endosome-to-plasma membrane transport for cargo protein recycling. The SNX3-retromer mediates the retrograde endosome-to-TGN transport of WLS distinct from the SNX-BAR retromer pathway. The SNX27-retromer is believed to be involved in endosome-to-plasma membrane trafficking and recycling of a broad spectrum of cargo proteins. The CSC complex seems to act as recruitment hub for other proteins, such as the WASH complex and TBC1D5. Required for retrograde transport of lysosomal enzyme receptor IGF2R. Required to regulate transcytosis of the polymeric immunoglobulin receptor (pIgR-pIgA). Required for the endosomal localization of WASHC2 (indicative for the WASH complex). Required for the endosomal localization of TBC1D5. Mediates retromer cargo recognition of SORL1 and is involved in trafficking of SORL1 implicated in sorting and processing of APP. Involved in retromer-independent lysosomal sorting of F2R. Involved in recycling of ADRB2. Acts redundantly with VSP26B in SNX-27 mediated endocytic recycling of SLC2A1/GLUT1. Enhances the affinity of SNX27 for PDZ-binding motifs in cargo proteins. The chain is Vacuolar protein sorting-associated protein 26A (VPS26A) from Bos taurus (Bovine).